Reading from the N-terminus, the 640-residue chain is MTEFSKTPLLDTIRTPDDLRKLRIDQVQQVADELRLETIDAVSVTGGHFGAGLGVVELTTAIHYVFDTPRDRLIWDVGHQAYPHKILTGRRDRIRTLRTGGGLSGFTKRTESDHDPFGAGHSSTSISAGLGMAVASDLAGTKNNVIAVIGDGSISAGMAYEAMNNAGAMNSRLIVILNDNNMSIAPPVGAMSAYLSRLYSGKTYRSLREAGKQIGKHLPKLIADRAARAEEYSRGFMMGGGTLFEELGFYYVGPIDGHNLDHLLPILQNVRDADAGPFLIHVVTQKGKGYAPAEAAADKYHAVVKFDIATGTQAKTKSNAPSYQNVFGASLVKEAQKDDKIVGITAAMPSGTGIDIFEKAFPKRTFDVGIAEQHAVTFAAGLATEGFKPFCAIYSTFLQRGYDQIVHDVAIQNLPVRFAIDRAGLVGADGATHAGSFDNAYLGCLPNFVIMAASDEAELVHMVATQVAINDAPSAVRYPRGEGRGVEMPEVGIPLEIGKGRVVRQGNKIALLSFGTRLAECEKAADELATLGLSTTVADARFMKPLDVELVLKLAREHEVLITVEEGSIGGFGSHVMQTLAEHGMLDGEVRMRSLVLPDEFMDHDTPAVMYARAGLDAKGIVKKVFEALGKDKAETVKLA.

Thiamine diphosphate contacts are provided by residues His79 and 120–122 (GHS). Asp151 is a binding site for Mg(2+). Thiamine diphosphate contacts are provided by residues 152-153 (GS), Asn180, Tyr290, and Glu372. Asn180 is a Mg(2+) binding site.

Belongs to the transketolase family. DXPS subfamily. Homodimer. The cofactor is Mg(2+). Requires thiamine diphosphate as cofactor.

The catalysed reaction is D-glyceraldehyde 3-phosphate + pyruvate + H(+) = 1-deoxy-D-xylulose 5-phosphate + CO2. It functions in the pathway metabolic intermediate biosynthesis; 1-deoxy-D-xylulose 5-phosphate biosynthesis; 1-deoxy-D-xylulose 5-phosphate from D-glyceraldehyde 3-phosphate and pyruvate: step 1/1. Functionally, catalyzes the acyloin condensation reaction between C atoms 2 and 3 of pyruvate and glyceraldehyde 3-phosphate to yield 1-deoxy-D-xylulose-5-phosphate (DXP). In Rhodopseudomonas palustris (strain BisA53), this protein is 1-deoxy-D-xylulose-5-phosphate synthase.